A 1227-amino-acid polypeptide reads, in one-letter code: Sterol 3-beta-glucosyltransferase (1227 aa).

Disordered regions lie at residues 1–76 and 104–189; these read MLKG…AASP and QLAT…MTSK. Over residues 48-57 the composition is skewed to basic and acidic residues; the sequence is KHKEAERRLT. Residues 114–135 show a composition bias toward acidic residues; the sequence is AGADETEDEMDEAGDETGDDAD. Positions 154 to 171 are enriched in basic and acidic residues; it reads ESRRSTLFELSIEPHPES. A compositionally biased stretch (basic residues) spans 179-189; the sequence is TKNRRSRMTSK. Positions 188–229 constitute a GRAM 1 domain; that stretch reads SKLRSKFNLDDDEELVREYPCWLLRDVLIQGHIYLTSRNLLF. A PH domain is found at 239–342; it reads SARLTGNLSI…WSSALKKQVF (104 aa). Positions 449 to 469 are enriched in low complexity; it reads DAAIASEAAADAAAADTASHS. Disordered regions lie at residues 449–484 and 523–550; these read DAAIASEAAADAAAADTASHSPSTNAEPRARGRSTE and TLKLTTPRQPGSDAPQEPEPETTILESR. A GRAM 2 domain is found at 602–668; the sequence is KRFKAHFSLT…HDVENCYKEQ (67 aa). Residues serine 786, arginine 787, aspartate 789, asparagine 1060, asparagine 1088, valine 1089, histidine 1091, histidine 1104, serine 1107, glycine 1108, threonine 1109, aspartate 1128, and glutamine 1129 each contribute to the UDP-alpha-D-glucose site.

Belongs to the glycosyltransferase 28 family.

The protein localises to the cytoplasm. It is found in the membrane. The catalysed reaction is a sterol + UDP-alpha-D-glucose = a sterol 3-beta-D-glucoside + UDP + H(+). The enzyme catalyses ergosterol + UDP-alpha-D-glucose = ergosteryl 3-beta-D-glucoside + UDP + H(+). In terms of biological role, sterol glycosyltransferase responsible for the glycosylation of ergosterol to form ergosterol-glucoside. The sequence is that of Sterol 3-beta-glucosyltransferase from Eremothecium gossypii (strain ATCC 10895 / CBS 109.51 / FGSC 9923 / NRRL Y-1056) (Yeast).